A 732-amino-acid polypeptide reads, in one-letter code: Acylamino-acid-releasing enzyme (732 aa).

M1 is subject to Blocked amino end (Met); alternate. The residue at position 1 (M1) is an N-acetylmethionine; alternate. Residues S185 and S187 each carry the phosphoserine modification. Residues S587, D675, and H707 each act as charge relay system in the active site.

This sequence belongs to the peptidase S9C family. In terms of assembly, homotetramer.

It is found in the cytoplasm. The enzyme catalyses Cleavage of an N-acetyl or N-formyl amino acid from the N-terminus of a polypeptide.. Homotetramerization is required for activity. Tetramerization results in the formation of a gated channel which is involved in substrate selection and substrate access to the catalytic sites. In terms of biological role, this enzyme catalyzes the hydrolysis of the N-terminal peptide bond of an N-acetylated peptide to generate an N-acetylated amino acid and a peptide with a free N-terminus. It preferentially cleaves off Ac-Ala, Ac-Met and Ac-Ser. Also, involved in the degradation of oxidized and glycated proteins. The sequence is that of Acylamino-acid-releasing enzyme (Apeh) from Rattus norvegicus (Rat).